A 745-amino-acid chain; its full sequence is MEFDEIKKHSLNCNADVLSSLQASAPASSPHTVTLKVNAVAEATITEKRNQQQNVQKDFDSHNRDCDSPVSSTSELEKEFDDLRNLHTSSLTNSVVLGKSIGSLNGDYSVTSASSRTKTLENVVTIDSASGSTCLAIASPVDHIKKRIPNSRTPTRKALRIKFYRNGDRFYPGITIPVSNERYRSFERLYEDLTRLLEENVKIPGAVRTIYNMCGKKITSLDELEDGQSYVCSCNNENFKKVEYNTGSQPLSNLTLTNNSRSNNQRLAKCRPASPLKNGLLTGISPLPASGGGTGNGSPLIASRLSDRVSVVHPRIVTLIRSGTKPRRIMRLLLNKRNSPSFDHVLTAITQVVRLDTGYVRKVFTLSGISVVQLSDFFGSDDVFFAYGTERINYAEDFKLEAEEYRAINVIRKTMRTAGTTCKGPKPKMPIKSKKVYPPLVDSEVLKAATSPEDDSHATLLTSTGIEINELPLNIRNTYTLGRIIGDGNFAIVFKIKHRQTGDSYALKIIDKNKCKGKEHYIDAEVRVMKKLNHPHIISLILSVDQNTNMYLVLEYVSGGDLFDAITQVTRFSESQSRIMIRHLGAAMTYLHSMGIVHRDIKPENLLVKLDEHGNVLELKLADFGLACEVNDLLYAVCGTPTYVAPEILLEVGYGLKIDVWAAGIILYILLCGFPPFVAPDNQQEPLFDAIISGIYEFPDPYWSDIGDGVRDLIANMLQSDPDVRFTSEDILDHYWTIGNKGNDL.

The interval 49–73 (RNQQQNVQKDFDSHNRDCDSPVSST) is disordered. A compositionally biased stretch (basic and acidic residues) spans 57–67 (KDFDSHNRDCD). Doublecortin domains follow at residues 159–245 (LRIK…VEYN) and 315–398 (RIVT…AEDF). Residues 479–737 (YTLGRIIGDG…SEDILDHYWT (259 aa)) form the Protein kinase domain. ATP is bound by residues 485-493 (IGDGNFAIV) and Lys-508. The active-site Proton acceptor is the Asp-600.

It belongs to the protein kinase superfamily. CAMK Ser/Thr protein kinase family. CaMK subfamily.

It carries out the reaction L-seryl-[protein] + ATP = O-phospho-L-seryl-[protein] + ADP + H(+). It catalyses the reaction L-threonyl-[protein] + ATP = O-phospho-L-threonyl-[protein] + ADP + H(+). This Drosophila erecta (Fruit fly) protein is Serine/threonine-protein kinase GG21441.